The sequence spans 325 residues: MVHYKSVFYKSAALVCGFVLAGASVAIASSEAAAKTRSKMSEFKRRAVSSPSGGRLSVLDGSFTALANDASFFEANPAGSANMTHSELTFAHTVGFNNSHAETLSYVGQSGNWGYGASMRMFFPESGFNFSPSTGPVCTPASNPIKKLGGLGIVNFSRRFGGLSIGANLKAGFRDAQGLTHLSLGTDVGLQWVGNVAKFFSSAEPNMYVGLSATNLGFTVKLPGSPFVLCRATGEQCCKTCSGRCTGVGTCCNGEKPCCKDCDCNCPCQDEATPGSPHATDTMLRAGFAYRPLSWFLFSVGVATRVNVSNLQVDHSGSALPMRLG.

Positions 1–28 (MVHYKSVFYKSAALVCGFVLAGASVAIA) are cleaved as a signal peptide.

It belongs to the UPF0164 family.

This Treponema pallidum (strain Nichols) protein is UPF0164 protein TP_0856.